The sequence spans 322 residues: Ribosomal RNA small subunit methyltransferase H (322 aa).

S-adenosyl-L-methionine contacts are provided by residues 35–37 (GGY), aspartate 52, phenylalanine 79, aspartate 100, and glutamine 107. The tract at residues 254 to 322 (GATPAGSRHL…TAPKKEGRQG (69 aa)) is disordered. Residues 295–309 (SRSATLRVARRTAAA) show a composition bias toward low complexity.

It belongs to the methyltransferase superfamily. RsmH family.

The protein localises to the cytoplasm. It catalyses the reaction cytidine(1402) in 16S rRNA + S-adenosyl-L-methionine = N(4)-methylcytidine(1402) in 16S rRNA + S-adenosyl-L-homocysteine + H(+). Its function is as follows. Specifically methylates the N4 position of cytidine in position 1402 (C1402) of 16S rRNA. The chain is Ribosomal RNA small subunit methyltransferase H from Rhizorhabdus wittichii (strain DSM 6014 / CCUG 31198 / JCM 15750 / NBRC 105917 / EY 4224 / RW1) (Sphingomonas wittichii).